The sequence spans 327 residues: Methionyl-tRNA formyltransferase (327 aa).

A (6S)-5,6,7,8-tetrahydrofolate-binding site is contributed by 121–124 (SLLP).

This sequence belongs to the Fmt family.

The catalysed reaction is L-methionyl-tRNA(fMet) + (6R)-10-formyltetrahydrofolate = N-formyl-L-methionyl-tRNA(fMet) + (6S)-5,6,7,8-tetrahydrofolate + H(+). Its function is as follows. Attaches a formyl group to the free amino group of methionyl-tRNA(fMet). The formyl group appears to play a dual role in the initiator identity of N-formylmethionyl-tRNA by promoting its recognition by IF2 and preventing the misappropriation of this tRNA by the elongation apparatus. The protein is Methionyl-tRNA formyltransferase of Burkholderia ambifaria (strain ATCC BAA-244 / DSM 16087 / CCUG 44356 / LMG 19182 / AMMD) (Burkholderia cepacia (strain AMMD)).